The chain runs to 74 residues: Peptide ToAP4 (74 aa).

A signal peptide spans 1–22 (MQIKHLITLFFLVLIVADQCSA). At lysine 39 the chain carries Lysine amide. The propeptide occupies 40-74 (GGRRKREIAAQIEQYRDLQKREAELEELLDRLPMF).

It belongs to the non-disulfide-bridged peptide (NDBP) superfamily. Short antimicrobial peptide (group 4) family. In terms of tissue distribution, expressed by the venom gland.

It localises to the secreted. Shows anti-inflammatory activities, since it decreases release of pro-inflammatory cytokines, and increases release of anti-inflammatory cytokines. Acts by blocking the Toll-like receptor 4 (TLR4). Also increases MHC-II expression in LPS-stimulated cells. Does not show antibacterial activity on Mycobacterium abscessus subsp. massiliense. Does not show antifungal activity. Has low hemolytic activity on human erythrocyte and low monocyte cytotoxicity. In vivo, does not induce immune cell migration. Helical wheel projections predict an amphipathic peptide with distinct hydrophobic and hydrophilic faces. This Tityus obscurus (Amazonian scorpion) protein is Peptide ToAP4.